We begin with the raw amino-acid sequence, 343 residues long: S-adenosylmethionine:tRNA ribosyltransferase-isomerase (343 aa).

The protein belongs to the QueA family. As to quaternary structure, monomer.

It is found in the cytoplasm. The enzyme catalyses 7-aminomethyl-7-carbaguanosine(34) in tRNA + S-adenosyl-L-methionine = epoxyqueuosine(34) in tRNA + adenine + L-methionine + 2 H(+). The protein operates within tRNA modification; tRNA-queuosine biosynthesis. Its function is as follows. Transfers and isomerizes the ribose moiety from AdoMet to the 7-aminomethyl group of 7-deazaguanine (preQ1-tRNA) to give epoxyqueuosine (oQ-tRNA). This chain is S-adenosylmethionine:tRNA ribosyltransferase-isomerase, found in Borreliella burgdorferi (strain ATCC 35210 / DSM 4680 / CIP 102532 / B31) (Borrelia burgdorferi).